The chain runs to 909 residues: UPF0182 protein Moth_1139 (909 aa).

A run of 7 helical transmembrane segments spans residues 8-28 (FCLLIIIPGFLVAAYLGSHFL), 51-71 (VGIRLGTIAFFFLFFYLNLLF), 103-123 (LGILYLLLSLAGALIFSPLAA), 165-185 (LLITAVVGAVLVTGFFYFIFN), 201-221 (LVHFSTLVALLFLIQAWGFRL), 245-265 (LLPGYNILGWVAVACGLIIVL), and 277-297 (AGILSFMAAYFLLVIAVPLAV). The segment at 843 to 862 (PAPAASPQPPSQAATGSPGN) is disordered.

This sequence belongs to the UPF0182 family.

It localises to the cell membrane. The chain is UPF0182 protein Moth_1139 from Moorella thermoacetica (strain ATCC 39073 / JCM 9320).